The chain runs to 517 residues: Serine carboxypeptidase ctsa-3.2 (517 aa).

The N-terminal stretch at 1-21 (MWWTSLVFSVLLFDLIFISNC) is a signal peptide. The active site involves Ser-172. An N-linked (GlcNAc...) asparagine glycan is attached at Asn-269. Active-site residues include Asp-418 and His-485.

It belongs to the peptidase S10 family.

This Caenorhabditis elegans protein is Serine carboxypeptidase ctsa-3.2.